The sequence spans 219 residues: MNRLFGKAKPKAPPPSLTDCIGTVDSRAESIDKKISRLDAELVKYKDQIKKMREGPAKNMVKQKALRVLKQKRMYEQQRDNLAQQSFNMEQANYTIQSLKDTKTTVDAMKLGVKEMKKAYKQVKIDQIEDLQDQLEDMMEDANEIQEALSRSYGTPELDEDDLEAELDALGDELLADEDSSYLDEAASAPAIPEGVPTDTKNKDGVLVDEFGLPQIPAS.

Positions 1-10 are enriched in basic residues; the sequence is MNRLFGKAKP. The tract at residues 1-21 is disordered; that stretch reads MNRLFGKAKPKAPPPSLTDCI. K7 carries the (Microbial infection) N6-stearoyl lysine lipid modification. The stretch at 26–179 forms a coiled coil; that stretch reads SRAESIDKKI…LGDELLADED (154 aa). A Phosphoserine modification is found at S86. An interaction with VTA1 region spans residues 121 to 158; the sequence is KQVKIDQIEDLQDQLEDMMEDANEIQEALSRSYGTPEL. The disordered stretch occupies residues 188–219; that stretch reads SAPAIPEGVPTDTKNKDGVLVDEFGLPQIPAS.

It belongs to the SNF7 family. Probable peripherally associated component of the endosomal sorting required for transport complex III (ESCRT-III). ESCRT-III components are thought to multimerize to form a flat lattice on the perimeter membrane of the endosome. Several assembly forms of ESCRT-III may exist that interact and act sequentially. Interacts with VTA1; the interaction involves soluble CHMP5. Interacts with CHMP2A. Interacts with NOD2. Interacts with BROX. (Microbial infection) Stearoylated By S.flexneri N-epsilon-fatty acyltransferase IcsB, promoting S.flexneri evasion of autophagy. Post-translationally, ISGylated. Isgylation inhibits its interaction with VTA1.

It is found in the cytoplasm. The protein localises to the cytosol. It localises to the endosome membrane. The protein resides in the midbody. In terms of biological role, probable peripherally associated component of the endosomal sorting required for transport complex III (ESCRT-III) which is involved in multivesicular bodies (MVBs) formation and sorting of endosomal cargo proteins into MVBs. MVBs contain intraluminal vesicles (ILVs) that are generated by invagination and scission from the limiting membrane of the endosome and mostly are delivered to lysosomes enabling degradation of membrane proteins, such as stimulated growth factor receptors, lysosomal enzymes and lipids. The MVB pathway appears to require the sequential function of ESCRT-O, -I,-II and -III complexes. ESCRT-III proteins mostly dissociate from the invaginating membrane before the ILV is released. The ESCRT machinery also functions in topologically equivalent membrane fission events, such as the terminal stages of cytokinesis and the budding of enveloped viruses (HIV-1 and other lentiviruses). ESCRT-III proteins are believed to mediate the necessary vesicle extrusion and/or membrane fission activities, possibly in conjunction with the AAA ATPase VPS4. Involved in HIV-1 p6- and p9-dependent virus release. This Homo sapiens (Human) protein is Charged multivesicular body protein 5 (CHMP5).